Reading from the N-terminus, the 506-residue chain is Nucleoside import ATP-binding protein NupA (506 aa).

2 ABC transporter domains span residues 7–242 (IQMI…VGRS) and 259–503 (LEIK…VGGN). 39-46 (GENGAGKS) contributes to the ATP binding site.

This sequence belongs to the ABC transporter superfamily. In terms of assembly, the complex is composed of two ATP-binding proteins (NupA), two transmembrane proteins (NupB and NupC) and a solute-binding protein (BmpA).

The protein localises to the cell membrane. Functionally, part of an ABC transporter complex involved in the uptake of all common nucleosides. Responsible for energy coupling to the transport system. This is Nucleoside import ATP-binding protein NupA from Lactococcus lactis subsp. cremoris (strain MG1363).